Reading from the N-terminus, the 72-residue chain is Translational regulator CsrA (72 aa).

Belongs to the CsrA/RsmA family. Homodimer; the beta-strands of each monomer intercalate to form a hydrophobic core, while the alpha-helices form wings that extend away from the core.

The protein resides in the cytoplasm. A translational regulator that binds mRNA to regulate translation initiation and/or mRNA stability. Usually binds in the 5'-UTR at or near the Shine-Dalgarno sequence preventing ribosome-binding, thus repressing translation. Its main target seems to be the major flagellin gene, while its function is anatagonized by FliW. The sequence is that of Translational regulator CsrA from Clostridium botulinum (strain ATCC 19397 / Type A).